Here is a 68-residue protein sequence, read N- to C-terminus: UPF0253 protein VF_0662 (68 aa).

The protein belongs to the UPF0253 family.

This is UPF0253 protein VF_0662 from Aliivibrio fischeri (strain ATCC 700601 / ES114) (Vibrio fischeri).